A 152-amino-acid chain; its full sequence is Transcriptional repressor NrdR (152 aa).

A zinc finger lies at 3-34; the sequence is CPFCNAADSKVIDSRLAAEGCQIRRRRECVSC. The region spanning 49–139 is the ATP-cone domain; sequence PRVIKSNGKN…VYQDFQDVEA (91 aa).

It belongs to the NrdR family. Zn(2+) is required as a cofactor.

In terms of biological role, negatively regulates transcription of bacterial ribonucleotide reductase nrd genes and operons by binding to NrdR-boxes. The polypeptide is Transcriptional repressor NrdR (Acinetobacter baumannii (strain AB0057)).